The following is a 195-amino-acid chain: Xanthine phosphoribosyltransferase (195 aa).

Residues leucine 20 and asparagine 27 each coordinate xanthine. Position 128 to 132 (128 to 132 (ANGQA)) interacts with 5-phospho-alpha-D-ribose 1-diphosphate. Lysine 156 is a binding site for xanthine.

Belongs to the purine/pyrimidine phosphoribosyltransferase family. Xpt subfamily. Homodimer.

Its subcellular location is the cytoplasm. It catalyses the reaction XMP + diphosphate = xanthine + 5-phospho-alpha-D-ribose 1-diphosphate. The protein operates within purine metabolism; XMP biosynthesis via salvage pathway; XMP from xanthine: step 1/1. In terms of biological role, converts the preformed base xanthine, a product of nucleic acid breakdown, to xanthosine 5'-monophosphate (XMP), so it can be reused for RNA or DNA synthesis. The protein is Xanthine phosphoribosyltransferase of Latilactobacillus sakei subsp. sakei (strain 23K) (Lactobacillus sakei subsp. sakei).